A 292-amino-acid chain; its full sequence is Ribosomal protein L11 methyltransferase (292 aa).

Thr-145, Gly-166, Asp-188, and Asn-229 together coordinate S-adenosyl-L-methionine.

It belongs to the methyltransferase superfamily. PrmA family.

It is found in the cytoplasm. The catalysed reaction is L-lysyl-[protein] + 3 S-adenosyl-L-methionine = N(6),N(6),N(6)-trimethyl-L-lysyl-[protein] + 3 S-adenosyl-L-homocysteine + 3 H(+). Functionally, methylates ribosomal protein L11. This Alteromonas mediterranea (strain DSM 17117 / CIP 110805 / LMG 28347 / Deep ecotype) protein is Ribosomal protein L11 methyltransferase.